We begin with the raw amino-acid sequence, 119 residues long: MRNVYDIAYELATALKESNEFKRFKAAKEKIEKDEKLKQMISDFKKKQFELEQKRLKGEEVTSSDVYSLQQLYQIISLNPDIEEYLSAEMMLAKIIADISKIIADSIEFKDELWGFADK.

Belongs to the UPF0342 family.

This is UPF0342 protein Athe_0692 from Caldicellulosiruptor bescii (strain ATCC BAA-1888 / DSM 6725 / KCTC 15123 / Z-1320) (Anaerocellum thermophilum).